A 569-amino-acid polypeptide reads, in one-letter code: Putative potassium-transporting ATPase ATP-binding subunit (569 aa).

2 helical membrane-spanning segments follow: residues 34–54 (PVMF…LAMV) and 58–78 (IAGS…TVLF). The active-site 4-aspartylphosphate intermediate is the Asp194. ATP-binding positions include Asp231, Glu235, 264–271 (FTAQSRMS), and Lys282. Mg(2+) is bound by residues Asp405 and Asp409. 3 helical membrane passes run 475–495 (FAII…LNVM), 503–523 (AILS…PLAL), and 543–563 (IYGL…DVLL).

Belongs to the cation transport ATPase (P-type) (TC 3.A.3) family. Type IA subfamily. As to quaternary structure, the system is composed of three essential subunits: KdpA, KdpB and KdpC.

The protein localises to the cell inner membrane. The catalysed reaction is K(+)(out) + ATP + H2O = K(+)(in) + ADP + phosphate + H(+). Functionally, part of the high-affinity ATP-driven potassium transport (or Kdp) system, which catalyzes the hydrolysis of ATP coupled with the electrogenic transport of potassium into the cytoplasm. This subunit is responsible for energy coupling to the transport system and for the release of the potassium ions to the cytoplasm. In Salmonella typhi, this protein is Putative potassium-transporting ATPase ATP-binding subunit.